A 537-amino-acid polypeptide reads, in one-letter code: [Pyruvate dehydrogenase [acetyl-transferring]]-phosphatase 1, mitochondrial (537 aa).

The N-terminal 71 residues, 1 to 71 (MPAPTQLFFP…WWQYTQGRRY (71 aa)), are a transit peptide targeting the mitochondrion. In terms of domain architecture, PPM-type phosphatase spans 109-525 (ILGFDSNQLP…DDITIIVVQF (417 aa)). Mn(2+)-binding residues include Asp144 and Gly145. Residue Lys202 is modified to N6-acetyllysine. 2 residues coordinate Mn(2+): Asp418 and Asp516.

This sequence belongs to the PP2C family. As to quaternary structure, heterodimer of a catalytic (PDP1) and a regulatory (PDPR) subunit. Mn(2+) serves as cofactor. Requires Mg(2+) as cofactor.

The protein resides in the mitochondrion. It carries out the reaction O-phospho-L-seryl-[pyruvate dehydrogenase E1 alpha subunit] + H2O = L-seryl-[pyruvate dehydrogenase E1 alpha subunit] + phosphate. Magnesium-dependent and calcium-stimulated. PDP1 activity strongly depends on its Ca(2+)-dependent binding to the lipoyl domain of E2 subunit of component of the pyruvate dehydrogenase complex. Mitochondrial enzyme that catalyzes the dephosphorylation and concomitant reactivation of the alpha subunit of the E1 component of the pyruvate dehydrogenase complex (PDC), thereby stimulating the conversion of pyruvate into acetyl-CoA. The chain is [Pyruvate dehydrogenase [acetyl-transferring]]-phosphatase 1, mitochondrial from Homo sapiens (Human).